A 319-amino-acid polypeptide reads, in one-letter code: Alpha-hemolysin (319 aa).

An N-terminal signal peptide occupies residues 1 to 26 (MKTRIVSSVTTTLLLGSILMNPVAGA).

Belongs to the aerolysin family. Self-assembles to first form a non-lytic oligomeric intermediate, and then, a mushroom-shaped homoheptamer structure of 100 Angstroms in length and up to 100 Angstroms in diameter. Interacts with human ADAM10; this interaction is required for toxin pore formation, disruption of focal adhesions, and hly-mediated cytotoxicity.

Its subcellular location is the secreted. Alpha-toxin binds to the membrane of eukaryotic cells (particularly red blood cells, RBC) forming pores, resulting in hemolysis, with the release of low-molecular weight molecules leading to eventual osmotic RBC lysis. Human RBCs bind much less alpha-toxin than do rabbit RBCs. Heptamer oligomerization and pore formation is required for lytic activity. This Staphylococcus aureus protein is Alpha-hemolysin (hly).